The sequence spans 263 residues: Follistatin-related protein 3 (263 aa).

An N-terminal signal peptide occupies residues 1-26 (MRPGAPGPLWPLPWGALAWAVGFVSS). Positions 36–107 (GVCWLQQGQE…SCDGVECGPG (72 aa)) constitute a TB domain. Intrachain disulfides connect Cys38-Cys61, Cys48-Cys92, Cys62-Cys95, Cys99-Cys110, Cys104-Cys119, Cys121-Cys153, Cys125-Cys146, Cys135-Cys167, Cys171-Cys182, Cys176-Cys192, Cys195-Cys229, Cys200-Cys222, and Cys211-Cys243. N-linked (GlcNAc...) asparagine glycosylation is present at Asn73. Residues 99 to 119 (CDGVECGPGKACRMLGGRPRC) form the Follistatin-like 1 domain. Positions 113–169 (LGGRPRCECAPDCSGLPARLQVCGSDGATYRDECELRAARCRGHPDLSVMYRGRCRK) constitute a Kazal-like 1 domain. The Follistatin-like 2 domain occupies 170 to 193 (SCEHVVCPRPQSCVVDQTGSAHCV). The region spanning 189 to 245 (SAHCVVCRAAPCPVPSSPGQELCGNNNVTYISSCHMRQATCFLGRSIGVRHAGSCAG) is the Kazal-like 2 domain. N-linked (GlcNAc...) asparagine glycosylation is present at Asn215. Residues 242–263 (SCAGTPEEPPGGESAEEEENFV) form a disordered region. Ser255 is modified (phosphoserine; by FAM20C).

As to quaternary structure, interacts with INHBA and INHBB. Interacts with FN1. Interacts with ADAM12. Isoform 2 interacts with MLLT10; the interaction enhances MLLT10 in vitro transcriptional activity and self-association. Interacts with MSTN. As to expression, expressed in a wide range of tissues.

Its subcellular location is the secreted. It localises to the nucleus. Functionally, isoform 1 or the secreted form is a binding and antagonizing protein for members of the TGF-beta family, such as activin, BMP2 and MSTN. Inhibits activin A-, activin B-, BMP2- and MSDT-induced cellular signaling; more effective on activin A than on activin B. Involved in bone formation; inhibits osteoclast differentiation. Involved in hematopoiesis; involved in differentiation of hemopoietic progenitor cells, increases hematopoietic cell adhesion to fibronectin and seems to contribute to the adhesion of hematopoietic precursor cells to the bone marrow stroma. Isoform 2 or the nuclear form is probably involved in transcriptional regulation via interaction with MLLT10. This Homo sapiens (Human) protein is Follistatin-related protein 3 (FSTL3).